A 150-amino-acid polypeptide reads, in one-letter code: Ribosome maturation factor RimP (150 aa).

Belongs to the RimP family.

The protein localises to the cytoplasm. Functionally, required for maturation of 30S ribosomal subunits. The chain is Ribosome maturation factor RimP from Acaryochloris marina (strain MBIC 11017).